The sequence spans 322 residues: Thymidylate synthase (322 aa).

DUMP-binding positions include Arg-25 and 184–185; that span reads RR. Cys-204 acts as the Nucleophile in catalysis. DUMP is bound by residues 224 to 227, Asn-235, and 265 to 267; these read RSGD and HIY. Asp-227 is a binding site for (6R)-5,10-methylene-5,6,7,8-tetrahydrofolate. Ala-321 is a (6R)-5,10-methylene-5,6,7,8-tetrahydrofolate binding site.

This sequence belongs to the thymidylate synthase family. Bacterial-type ThyA subfamily. In terms of assembly, homodimer.

Its subcellular location is the cytoplasm. It carries out the reaction dUMP + (6R)-5,10-methylene-5,6,7,8-tetrahydrofolate = 7,8-dihydrofolate + dTMP. The protein operates within pyrimidine metabolism; dTTP biosynthesis. Functionally, catalyzes the reductive methylation of 2'-deoxyuridine-5'-monophosphate (dUMP) to 2'-deoxythymidine-5'-monophosphate (dTMP) while utilizing 5,10-methylenetetrahydrofolate (mTHF) as the methyl donor and reductant in the reaction, yielding dihydrofolate (DHF) as a by-product. This enzymatic reaction provides an intracellular de novo source of dTMP, an essential precursor for DNA biosynthesis. The sequence is that of Thymidylate synthase from Leuconostoc mesenteroides subsp. mesenteroides (strain ATCC 8293 / DSM 20343 / BCRC 11652 / CCM 1803 / JCM 6124 / NCDO 523 / NBRC 100496 / NCIMB 8023 / NCTC 12954 / NRRL B-1118 / 37Y).